The following is a 611-amino-acid chain: Guanylate-binding protein 6 (611 aa).

The tract at residues 1 to 308 (MTQPQMAPIC…NAINSGAVPC (308 aa)) is GTPase domain (Globular). In terms of domain architecture, GB1/RHD3-type G spans 33–275 (SQPVVVVAIV…FVSYIFTYAK (243 aa)). GTP is bound by residues 43 to 50 (GLYRTGKS), 65 to 67 (LGS), and 95 to 99 (DTEGL).

Belongs to the TRAFAC class dynamin-like GTPase superfamily. GB1/RHD3 GTPase family. GB1 subfamily.

The protein resides in the cytoplasmic vesicle. It carries out the reaction GTP + H2O = GDP + phosphate + H(+). Functionally, interferon (IFN)-inducible GTPase that plays important roles in innate immunity against a diverse range of bacterial, viral and protozoan pathogens, such as bacterial pathogens Listeria monocytogenes and Mycobacterium bovis BCG as well as the protozoan pathogen Toxoplasma gondii. Confers protection to several pathogens, including the bacterial pathogens Listeria monocytogenes and Mycobacterium bovis BCG as well as the protozoan pathogen Toxoplasma gondii. This Mus musculus (Mouse) protein is Guanylate-binding protein 6 (Gbp6).